An 83-amino-acid chain; its full sequence is NAD(P)H-quinone oxidoreductase subunit L (83 aa).

Transmembrane regions (helical) follow at residues 15-35 and 53-73; these read LLVLLAYTVLGGLYLVVVPLA and LGIYGMVFFFFPGMILFAPFL.

The protein belongs to the complex I NdhL subunit family. NDH-1 can be composed of about 15 different subunits; different subcomplexes with different compositions have been identified which probably have different functions.

The protein localises to the cellular thylakoid membrane. The enzyme catalyses a plastoquinone + NADH + (n+1) H(+)(in) = a plastoquinol + NAD(+) + n H(+)(out). The catalysed reaction is a plastoquinone + NADPH + (n+1) H(+)(in) = a plastoquinol + NADP(+) + n H(+)(out). In terms of biological role, NDH-1 shuttles electrons from an unknown electron donor, via FMN and iron-sulfur (Fe-S) centers, to quinones in the respiratory and/or the photosynthetic chain. The immediate electron acceptor for the enzyme in this species is believed to be plastoquinone. Couples the redox reaction to proton translocation, and thus conserves the redox energy in a proton gradient. Cyanobacterial NDH-1 also plays a role in inorganic carbon-concentration. This chain is NAD(P)H-quinone oxidoreductase subunit L, found in Synechococcus sp. (strain CC9605).